Reading from the N-terminus, the 206-residue chain is MAATKTASYDEHFRPEKLREWPEPESVSLMEVLAREDIDEAVCAILFKENSIVKVTVPPFVDPLFQRQQEVDEERRTGLQCETGKRHSIKELEEIEKARLHASSPYFTFTSHCVIPKEWHKASARARSKTYKYSPEKLIYADKKQKRKEKKTADLSQAAFERQFLSSKLSQKNKVGERKGLVSRGLGRGWHAGLCSTHEQHILVPE.

Belongs to the FAM228 family.

In Homo sapiens (Human), this protein is Protein FAM228A (FAM228A).